Reading from the N-terminus, the 384-residue chain is Ceramide synthase 6 (384 aa).

Topologically, residues 1–34 (MAGILAWFWNERFWLPHNVTWADLKNTEEATFPQ) are lumenal. Asparagine 18 is a glycosylation site (N-linked (GlcNAc...) asparagine). The helical transmembrane segment at 35-55 (AEDLYLAFPLAFCIFMVRLIF) threads the bilayer. The segment at 66–127 (ALNIQANGPQ…RQRRNQEKPS (62 aa)) is homeobox-like. The region spanning 130-331 (TRFCESMWRF…IVKIACKTVS (202 aa)) is the TLC domain. 4 helical membrane-spanning segments follow: residues 174-194 (LTAD…SLMV), 205-225 (FGIM…SYVN), 263-283 (LFVM…PLWV), and 303-323 (VFNL…YLIV). Residues 324 to 384 (KIACKTVSKG…LLTGPCSVDD (61 aa)) are Cytoplasmic-facing. Residues 335–384 (VSKDDRSDIESSSDDEDSEPPGKKPHSSTTTNGTSGTNGYLLTGPCSVDD) are disordered. A compositionally biased stretch (low complexity) spans 361–373 (SSTTTNGTSGTNG).

In terms of processing, N-glycosylated. Glycosylation on Asn-18 is not necessary for function. Acetylated. Deacetylation by SIRT3 increases enzyme activity and promotes mitochondrial ceramide accumulation. Post-translationally, phosphorylated at the C-terminus by CK2. Broadly expressed, with highest levels in kidney and brain (at protein level).

It is found in the endoplasmic reticulum membrane. The enzyme catalyses a sphingoid base + hexadecanoyl-CoA = an N-hexadecanoyl-sphingoid base + CoA + H(+). It carries out the reaction sphinganine + hexadecanoyl-CoA = N-hexadecanoylsphinganine + CoA + H(+). It catalyses the reaction hexadecasphinganine + hexadecanoyl-CoA = N-hexadecanoylhexadecasphinganine + CoA + H(+). The catalysed reaction is sphing-4-enine + hexadecanoyl-CoA = N-hexadecanoylsphing-4-enine + CoA + H(+). The enzyme catalyses sphinganine + tetradecanoyl-CoA = N-(tetradecanoyl)-sphinganine + CoA + H(+). It carries out the reaction sphinganine + octadecanoyl-CoA = N-(octadecanoyl)-sphinganine + CoA + H(+). The protein operates within lipid metabolism; sphingolipid metabolism. Its function is as follows. Ceramide synthase that catalyzes the transfer of the acyl chain from acyl-CoA to a sphingoid base, with high selectivity toward palmitoyl-CoA (hexadecanoyl-CoA; C16:0-CoA). Can use other acyl donors, but with less efficiency. N-acylates sphinganine and sphingosine bases to form dihydroceramides and ceramides in de novo synthesis and salvage pathways, respectively. Ceramides generated by CERS6 play a role in inflammatory response. Acts as a regulator of metabolism and hepatic lipid accumulation. Under high fat diet, palmitoyl- (C16:0-) ceramides generated by CERS6 specifically bind the mitochondrial fission factor MFF, thereby promoting mitochondrial fragmentation and contributing to the development of obesity. The protein is Ceramide synthase 6 of Mus musculus (Mouse).